A 384-amino-acid polypeptide reads, in one-letter code: PqqA peptide cyclase (384 aa).

One can recognise a Radical SAM core domain in the interval 5–220; it reads VGLPLWLLAE…TNEYREKLKA (216 aa). Residues Cys19, Cys23, and Cys26 each coordinate [4Fe-4S] cluster.

Belongs to the radical SAM superfamily. PqqE family. Interacts with PqqD. The interaction is necessary for activity of PqqE. The cofactor is [4Fe-4S] cluster.

The enzyme catalyses [PQQ precursor protein] + S-adenosyl-L-methionine = E-Y cross-linked-[PQQ precursor protein] + 5'-deoxyadenosine + L-methionine + H(+). It functions in the pathway cofactor biosynthesis; pyrroloquinoline quinone biosynthesis. Catalyzes the cross-linking of a glutamate residue and a tyrosine residue in the PqqA protein as part of the biosynthesis of pyrroloquinoline quinone (PQQ). The polypeptide is PqqA peptide cyclase (Acinetobacter baumannii (strain ACICU)).